A 92-amino-acid polypeptide reads, in one-letter code: Small ribosomal subunit protein uS19c (92 aa).

This sequence belongs to the universal ribosomal protein uS19 family.

The protein resides in the plastid. It localises to the chloroplast. Protein S19 forms a complex with S13 that binds strongly to the 16S ribosomal RNA. This chain is Small ribosomal subunit protein uS19c (rps19), found in Chlorella vulgaris (Green alga).